A 52-amino-acid chain; its full sequence is Large ribosomal subunit protein bL33 (52 aa).

The protein belongs to the bacterial ribosomal protein bL33 family.

The chain is Large ribosomal subunit protein bL33 (rpmG) from Chlamydia muridarum (strain MoPn / Nigg).